Reading from the N-terminus, the 228-residue chain is uncharacterized protein (228 aa).

A signal peptide spans 1-28; the sequence is MRKKRVITCVMAASLTLGSLLPAGYASA.

This is an uncharacterized protein from Bacillus subtilis (strain 168).